Consider the following 317-residue polypeptide: METWQEVTVHVHRDAQEAVSHVLIETGSQGVAIADSADYIGQKDRFGELYPDVEQSDMIAIIAYYPSSTNLADVIATINEQLAELASFGLQVGQVTVDSQELAEEDWADNWKKYYEPARITHDLTIVPSWTDYDASAGEKVIKLDPGMAFGTGTHPTTKMSLFALEQILRGGETVIDVGTGSGVLSIASSLLGAKTIYAYDLDDVAVRVAQENIDLNQGTDNIHVAAGDLLKGVSQEADVIVANILADILVLLTDDAYRLIKKEGYLILSGIISEKLDMVLEAAFSAGFFLETHMVQGEWNALVFKKTDDISGVIGG.

S-adenosyl-L-methionine contacts are provided by T158, G179, D201, and N244.

It belongs to the methyltransferase superfamily. PrmA family.

The protein resides in the cytoplasm. It carries out the reaction L-lysyl-[protein] + 3 S-adenosyl-L-methionine = N(6),N(6),N(6)-trimethyl-L-lysyl-[protein] + 3 S-adenosyl-L-homocysteine + 3 H(+). Functionally, methylates ribosomal protein L11. This is Ribosomal protein L11 methyltransferase from Streptococcus pyogenes serotype M28 (strain MGAS6180).